The following is a 275-amino-acid chain: MTDTHLITTIDTAWDNRDSVSTDTTGEVRDAVETAINLLDSGKARVASRGDDGHWVVHQWLKKAVLLGFRLNPMDLIEGGIAGAKWWDKVPSKFEGWGEAEFKAAGFRAVPPCAVRRGAFIAPGAVLMPSYVNLGAYVGEGTMIDTWASVGSCAQVGANCHISAGTGIGGVLEPLQADPVIIEDNCFIGARSEVVEGVIVREGSVLAMGVYITRSTKIVDRASGEISYGEVPAYSVVVPGALPDPKGGPSLYCAVIVKRVDAQTRAKTSINDLLR.

Substrate-binding residues include Arg-108 and Asp-145.

Belongs to the transferase hexapeptide repeat family. Homotrimer.

It localises to the cytoplasm. It carries out the reaction (S)-2,3,4,5-tetrahydrodipicolinate + succinyl-CoA + H2O = (S)-2-succinylamino-6-oxoheptanedioate + CoA. It participates in amino-acid biosynthesis; L-lysine biosynthesis via DAP pathway; LL-2,6-diaminopimelate from (S)-tetrahydrodipicolinate (succinylase route): step 1/3. This is 2,3,4,5-tetrahydropyridine-2,6-dicarboxylate N-succinyltransferase from Maricaulis maris (strain MCS10) (Caulobacter maris).